The sequence spans 98 residues: NADH-ubiquinone oxidoreductase chain 4L (98 aa).

A run of 3 helical transmembrane segments spans residues 2–22 (PSIS…MLMF), 29–49 (SLLC…LTIL), and 61–81 (ILLL…LVMV).

It belongs to the complex I subunit 4L family. In terms of assembly, core subunit of respiratory chain NADH dehydrogenase (Complex I) which is composed of 45 different subunits.

The protein localises to the mitochondrion inner membrane. The catalysed reaction is a ubiquinone + NADH + 5 H(+)(in) = a ubiquinol + NAD(+) + 4 H(+)(out). In terms of biological role, core subunit of the mitochondrial membrane respiratory chain NADH dehydrogenase (Complex I) which catalyzes electron transfer from NADH through the respiratory chain, using ubiquinone as an electron acceptor. Part of the enzyme membrane arm which is embedded in the lipid bilayer and involved in proton translocation. The polypeptide is NADH-ubiquinone oxidoreductase chain 4L (MT-ND4L) (Microcebus mittermeieri (Mittermeier's mouse lemur)).